We begin with the raw amino-acid sequence, 227 residues long: Cytochrome c oxidase subunit 2 (227 aa).

The Mitochondrial intermembrane portion of the chain corresponds to Met-1 to Ser-14. A helical transmembrane segment spans residues Pro-15–Met-45. Residues Leu-46–Gln-59 are Mitochondrial matrix-facing. A helical transmembrane segment spans residues Glu-60–Met-87. Residues Asp-88 to Leu-227 are Mitochondrial intermembrane-facing. Residues His-161, Cys-196, Glu-198, Cys-200, His-204, and Met-207 each contribute to the Cu cation site. Mg(2+) is bound at residue Glu-198.

Belongs to the cytochrome c oxidase subunit 2 family. Component of the cytochrome c oxidase (complex IV, CIV), a multisubunit enzyme composed of 14 subunits. The complex is composed of a catalytic core of 3 subunits MT-CO1, MT-CO2 and MT-CO3, encoded in the mitochondrial DNA, and 11 supernumerary subunits COX4I, COX5A, COX5B, COX6A, COX6B, COX6C, COX7A, COX7B, COX7C, COX8 and NDUFA4, which are encoded in the nuclear genome. The complex exists as a monomer or a dimer and forms supercomplexes (SCs) in the inner mitochondrial membrane with NADH-ubiquinone oxidoreductase (complex I, CI) and ubiquinol-cytochrome c oxidoreductase (cytochrome b-c1 complex, complex III, CIII), resulting in different assemblies (supercomplex SCI(1)III(2)IV(1) and megacomplex MCI(2)III(2)IV(2)). Found in a complex with TMEM177, COA6, COX18, COX20, SCO1 and SCO2. Interacts with TMEM177 in a COX20-dependent manner. Interacts with COX20. Interacts with COX16. It depends on Cu cation as a cofactor.

It is found in the mitochondrion inner membrane. It catalyses the reaction 4 Fe(II)-[cytochrome c] + O2 + 8 H(+)(in) = 4 Fe(III)-[cytochrome c] + 2 H2O + 4 H(+)(out). Functionally, component of the cytochrome c oxidase, the last enzyme in the mitochondrial electron transport chain which drives oxidative phosphorylation. The respiratory chain contains 3 multisubunit complexes succinate dehydrogenase (complex II, CII), ubiquinol-cytochrome c oxidoreductase (cytochrome b-c1 complex, complex III, CIII) and cytochrome c oxidase (complex IV, CIV), that cooperate to transfer electrons derived from NADH and succinate to molecular oxygen, creating an electrochemical gradient over the inner membrane that drives transmembrane transport and the ATP synthase. Cytochrome c oxidase is the component of the respiratory chain that catalyzes the reduction of oxygen to water. Electrons originating from reduced cytochrome c in the intermembrane space (IMS) are transferred via the dinuclear copper A center (CU(A)) of subunit 2 and heme A of subunit 1 to the active site in subunit 1, a binuclear center (BNC) formed by heme A3 and copper B (CU(B)). The BNC reduces molecular oxygen to 2 water molecules using 4 electrons from cytochrome c in the IMS and 4 protons from the mitochondrial matrix. In Hippopotamus amphibius (Hippopotamus), this protein is Cytochrome c oxidase subunit 2 (MT-CO2).